The following is a 1023-amino-acid chain: NLR family CARD domain-containing protein 4 (1023 aa).

Residues 1–88 (MNFIKENSQA…PVYQDLTGHS (88 aa)) form the CARD domain. The nucleotide-binding domain (NBD) stretch occupies residues 95–298 (EEDLDVLAQS…HVGALTVEVG (204 aa)). In terms of domain architecture, NACHT spans 163-476 (SPCLIEGESG…VSKGNSYLKK (314 aa)). 169–176 (GESGKGKS) serves as a coordination point for ATP. The segment at 356 to 463 (AHTQTMLFQT…RLSSLLKSRE (108 aa)) is winged-helix domain (WHD). At serine 533 the chain carries Phosphoserine. 12 LRR repeats span residues 578 to 598 (FFQG…LFDF), 655 to 678 (MQKF…DIKY), 734 to 757 (VTDL…LADS), 761 to 784 (LKNL…SLAE), 786 to 811 (LRNL…DYIV), 823 to 846 (EMKL…LHNL), 847 to 869 (VKLS…ALQG), 877 to 901 (LEQL…LLKQ), 910 to 932 (KLGL…FLEM), 935 to 962 (LRDL…VFEN), 964 to 984 (KQLV…ALVR), and 998 to 1020 (EARL…TFKL).

In terms of assembly, homooligomer; homooligomerizes following activation of Naip proteins by pathogenic proteins such as S.typhimurium (Salmonella) flagellin or PrgJ. Component of the NLRC4 inflammasome, at least composed of NLRC4, caspase-1 (CASP1) and some NAIP family member. Interacts with EIF2AK2/PKR. In terms of processing, phosphorylated at Ser-533 following infection of macrophages with S.typhimurium (Salmonella). Phosphorylation is essential for NLRC4 inflammasome function to promote caspase-1 activation and pyroptosis. PRKCD phosphorylates Ser-533 in vitro.

It is found in the cytoplasm. The protein resides in the cytosol. In terms of biological role, key component of inflammasomes that indirectly senses specific proteins from pathogenic bacteria and fungi and responds by assembling an inflammasome complex that promotes caspase-1 activation, cytokine production and macrophage pyroptosis. The NLRC4 inflammasome is activated as part of the innate immune response to a range of intracellular bacteria. This is NLR family CARD domain-containing protein 4 (Nlrc4) from Rattus norvegicus (Rat).